The sequence spans 436 residues: GTPase Obg (436 aa).

Residues 2–160 (SMFLDTAKIK…RELQLELKIL (159 aa)) form the Obg domain. The 178-residue stretch at 161 to 338 (ADVGLVGFPS…LLDATAELLD (178 aa)) folds into the OBG-type G domain. GTP-binding positions include 167–174 (GFPSVGKS), 192–196 (FTTIV), 214–217 (DLPG), 284–287 (NKMD), and 319–321 (SGL). Residues Ser-174 and Thr-194 each coordinate Mg(2+). The 79-residue stretch at 358 to 436 (GFDEEEKAFE…IGKFEFEFVD (79 aa)) folds into the OCT domain.

Belongs to the TRAFAC class OBG-HflX-like GTPase superfamily. OBG GTPase family. Monomer. It depends on Mg(2+) as a cofactor.

The protein localises to the cytoplasm. Functionally, an essential GTPase which binds GTP, GDP and possibly (p)ppGpp with moderate affinity, with high nucleotide exchange rates and a fairly low GTP hydrolysis rate. Plays a role in control of the cell cycle, stress response, ribosome biogenesis and in those bacteria that undergo differentiation, in morphogenesis control. The protein is GTPase Obg of Streptococcus pneumoniae (strain CGSP14).